Reading from the N-terminus, the 396-residue chain is 1-deoxy-D-xylulose 5-phosphate reductoisomerase (396 aa).

T15, G16, S17, I18, G41, and N129 together coordinate NADPH. K130 is a binding site for 1-deoxy-D-xylulose 5-phosphate. E131 contacts NADPH. Position 155 (D155) interacts with Mn(2+). 1-deoxy-D-xylulose 5-phosphate-binding residues include S156, E157, S182, and H205. E157 lines the Mn(2+) pocket. Residue G211 coordinates NADPH. 4 residues coordinate 1-deoxy-D-xylulose 5-phosphate: S218, N223, K224, and E227. Residue E227 coordinates Mn(2+).

Belongs to the DXR family. Requires Mg(2+) as cofactor. It depends on Mn(2+) as a cofactor.

The catalysed reaction is 2-C-methyl-D-erythritol 4-phosphate + NADP(+) = 1-deoxy-D-xylulose 5-phosphate + NADPH + H(+). Its pathway is isoprenoid biosynthesis; isopentenyl diphosphate biosynthesis via DXP pathway; isopentenyl diphosphate from 1-deoxy-D-xylulose 5-phosphate: step 1/6. Functionally, catalyzes the NADPH-dependent rearrangement and reduction of 1-deoxy-D-xylulose-5-phosphate (DXP) to 2-C-methyl-D-erythritol 4-phosphate (MEP). This is 1-deoxy-D-xylulose 5-phosphate reductoisomerase from Xanthomonas oryzae pv. oryzae (strain PXO99A).